The following is a 265-amino-acid chain: tRNA pseudouridine synthase A (265 aa).

The Nucleophile role is filled by Asp58. Residue Tyr116 coordinates substrate.

The protein belongs to the tRNA pseudouridine synthase TruA family. As to quaternary structure, homodimer.

The catalysed reaction is uridine(38/39/40) in tRNA = pseudouridine(38/39/40) in tRNA. Functionally, formation of pseudouridine at positions 38, 39 and 40 in the anticodon stem and loop of transfer RNAs. The sequence is that of tRNA pseudouridine synthase A from Neisseria gonorrhoeae (strain ATCC 700825 / FA 1090).